Consider the following 401-residue polypeptide: 3-oxoadipyl-CoA/3-oxo-5,6-dehydrosuberyl-CoA thiolase (401 aa).

Residue C90 is the Acyl-thioester intermediate of the active site. Catalysis depends on proton acceptor residues H357 and C387.

This sequence belongs to the thiolase-like superfamily. Thiolase family.

The enzyme catalyses succinyl-CoA + acetyl-CoA = 3-oxoadipyl-CoA + CoA. It carries out the reaction 2,3-didehydroadipoyl-CoA + acetyl-CoA = 3-oxo-5,6-didehydrosuberyl-CoA + CoA. The protein operates within aromatic compound metabolism; phenylacetate degradation. Functionally, catalyzes the thiolytic cleavage of the beta-keto C8 intermediate 3-oxo-5,6-dehydrosuberyl-CoA with CoA to yield the C6 intermediate 2,3-dehydroadipyl-CoA and acetyl-CoA. Besides it catalyzes also the last step of the pathway, in which 3-oxoadipyl-CoA similarly is cleaved to acetyl-CoA and succinyl-CoA. This Escherichia coli (strain K12) protein is 3-oxoadipyl-CoA/3-oxo-5,6-dehydrosuberyl-CoA thiolase (paaJ).